Here is a 208-residue protein sequence, read N- to C-terminus: Thymidylate kinase (208 aa).

Gly-10–Thr-17 contacts ATP.

This sequence belongs to the thymidylate kinase family.

It carries out the reaction dTMP + ATP = dTDP + ADP. Its function is as follows. Phosphorylation of dTMP to form dTDP in both de novo and salvage pathways of dTTP synthesis. The chain is Thymidylate kinase from Bacillus cereus (strain AH187).